The sequence spans 336 residues: Holliday junction branch migration complex subunit RuvB (336 aa).

Positions 4 to 184 (ADRLISAGAT…FGIVQRLEFY (181 aa)) are large ATPase domain (RuvB-L). Residues Ile-23, Arg-24, Gly-65, Lys-68, Thr-69, Thr-70, 131–133 (EDY), Arg-174, Tyr-184, and Arg-221 contribute to the ATP site. Thr-69 is a Mg(2+) binding site. The interval 185 to 255 (QVPDLQHIVG…IAAQALDMLN (71 aa)) is small ATPAse domain (RuvB-S). A head domain (RuvB-H) region spans residues 258–336 (AEGFDYMDRK…HFGITPPEMP (79 aa)). The DNA site is built by Arg-294, Arg-313, and Arg-318.

It belongs to the RuvB family. As to quaternary structure, homohexamer. Forms an RuvA(8)-RuvB(12)-Holliday junction (HJ) complex. HJ DNA is sandwiched between 2 RuvA tetramers; dsDNA enters through RuvA and exits via RuvB. An RuvB hexamer assembles on each DNA strand where it exits the tetramer. Each RuvB hexamer is contacted by two RuvA subunits (via domain III) on 2 adjacent RuvB subunits; this complex drives branch migration. In the full resolvosome a probable DNA-RuvA(4)-RuvB(12)-RuvC(2) complex forms which resolves the HJ.

The protein resides in the cytoplasm. It carries out the reaction ATP + H2O = ADP + phosphate + H(+). Functionally, the RuvA-RuvB-RuvC complex processes Holliday junction (HJ) DNA during genetic recombination and DNA repair, while the RuvA-RuvB complex plays an important role in the rescue of blocked DNA replication forks via replication fork reversal (RFR). RuvA specifically binds to HJ cruciform DNA, conferring on it an open structure. The RuvB hexamer acts as an ATP-dependent pump, pulling dsDNA into and through the RuvAB complex. RuvB forms 2 homohexamers on either side of HJ DNA bound by 1 or 2 RuvA tetramers; 4 subunits per hexamer contact DNA at a time. Coordinated motions by a converter formed by DNA-disengaged RuvB subunits stimulates ATP hydrolysis and nucleotide exchange. Immobilization of the converter enables RuvB to convert the ATP-contained energy into a lever motion, pulling 2 nucleotides of DNA out of the RuvA tetramer per ATP hydrolyzed, thus driving DNA branch migration. The RuvB motors rotate together with the DNA substrate, which together with the progressing nucleotide cycle form the mechanistic basis for DNA recombination by continuous HJ branch migration. Branch migration allows RuvC to scan DNA until it finds its consensus sequence, where it cleaves and resolves cruciform DNA. In Salmonella arizonae (strain ATCC BAA-731 / CDC346-86 / RSK2980), this protein is Holliday junction branch migration complex subunit RuvB.